The chain runs to 813 residues: Leucine--tRNA ligase (813 aa).

Positions Pro41–His51 match the 'HIGH' region motif. The short motif at Lys575–Ser579 is the 'KMSKS' region element. ATP is bound at residue Lys578.

The protein belongs to the class-I aminoacyl-tRNA synthetase family.

The protein localises to the cytoplasm. It catalyses the reaction tRNA(Leu) + L-leucine + ATP = L-leucyl-tRNA(Leu) + AMP + diphosphate. The polypeptide is Leucine--tRNA ligase (Francisella tularensis subsp. tularensis (strain WY96-3418)).